A 365-amino-acid chain; its full sequence is Chorismate synthase (365 aa).

R46 provides a ligand contact to NADP(+). FMN-binding positions include 124–126, G284, 299–303, and R326; these read RAS and KPTPS.

It belongs to the chorismate synthase family. FMNH2 serves as cofactor.

It carries out the reaction 5-O-(1-carboxyvinyl)-3-phosphoshikimate = chorismate + phosphate. It functions in the pathway metabolic intermediate biosynthesis; chorismate biosynthesis; chorismate from D-erythrose 4-phosphate and phosphoenolpyruvate: step 7/7. Its function is as follows. Catalyzes the anti-1,4-elimination of the C-3 phosphate and the C-6 proR hydrogen from 5-enolpyruvylshikimate-3-phosphate (EPSP) to yield chorismate, which is the branch point compound that serves as the starting substrate for the three terminal pathways of aromatic amino acid biosynthesis. This reaction introduces a second double bond into the aromatic ring system. The chain is Chorismate synthase from Pyrobaculum neutrophilum (strain DSM 2338 / JCM 9278 / NBRC 100436 / V24Sta) (Thermoproteus neutrophilus).